The chain runs to 638 residues: Growth hormone receptor (638 aa).

The first 18 residues, 1–18 (MDLWQLLLTVALAGSSDA), serve as a signal peptide directing secretion. At 19 to 264 (FSGSEATPAT…SPFTCEEDFR (246 aa)) the chain is on the extracellular side. Positions 30–51 (GRASESVQRVHPGLGTNSSGKP) are disordered. An N-linked (GlcNAc...) asparagine glycan is attached at asparagine 46. Intrachain disulfides connect cysteine 56/cysteine 66 and cysteine 101/cysteine 112. N-linked (GlcNAc...) asparagine glycosylation is present at asparagine 115. An intrachain disulfide couples cysteine 126 to cysteine 140. Residues 151 to 254 (PPIGLNWTLL…EVLYVTLPQM (104 aa)) form the Fibronectin type-III domain. Residues asparagine 156, asparagine 161, and asparagine 200 are each glycosylated (N-linked (GlcNAc...) asparagine). A WSXWS motif motif is present at residues 240–244 (YGEFS). The segment at 260–262 (EED) is required for ADAM17-mediated proteolysis. The chain crosses the membrane as a helical span at residues 265-288 (FPWFLIIIFGIFGLTVMLFVFIFS). Over 289-638 (KQQRIKMLIL…STDQLNKILP (350 aa)) the chain is Cytoplasmic. The segment at 294-379 (KMLILPPVPV…HQKSLSVLAA (86 aa)) is required for JAK2 binding. Residues 297–305 (ILPPVPVPK) carry the Box 1 motif motif. The UbE motif motif lies at 340 to 349 (DSWVEFIELD). Serine 341 carries the post-translational modification Phosphoserine. Phosphotyrosine is present on tyrosine 487. Residues 573–592 (TTTAERSGTAEDAPGSEMPV) are disordered. A Phosphotyrosine modification is found at tyrosine 595.

Belongs to the type I cytokine receptor family. Type 1 subfamily. As to quaternary structure, on growth hormone (GH) binding, forms homodimers and binds JAK2 via a box 1-containing domain. Post-translationally, the soluble form (GHBP) is produced by phorbol ester-promoted proteolytic cleavage at the cell surface (shedding) by ADAM17/TACE. Shedding is inhibited by growth hormone (GH) binding to the receptor probably due to a conformational change in GHR rendering the receptor inaccessible to ADAM17. In terms of processing, on GH binding, phosphorylated on tyrosine residues in the cytoplasmic domain by JAK2. Ubiquitinated by the ECS(SOCS2) complex following ligand-binding and phosphorylation by JAK2, leading to its degradation by the proteasome. Regulation by the ECS(SOCS2) complex acts as a negative feedback loop of growth hormone receptor signaling. Ubiquitination is not sufficient for GHR internalization.

Its subcellular location is the cell membrane. The protein localises to the secreted. Its function is as follows. Receptor for pituitary gland growth hormone involved in regulating postnatal body growth. On ligand binding, couples to, and activates the JAK2/STAT5 pathway. Functionally, the soluble form acts as a reservoir of growth hormone in plasma and may be a modulator/inhibitor of GH signaling. This is Growth hormone receptor from Oryctolagus cuniculus (Rabbit).